The sequence spans 297 residues: Transcription factor LRL3 (297 aa).

The tract at residues 59–109 (PDQFHHPQESGGPTMGSQEGLQPQGTVSTTSAPVVRQKPRVRARRGQATDP) is disordered. The span at 73 to 90 (MGSQEGLQPQGTVSTTSA) shows a compositional bias: polar residues. A basic motif; degenerate region spans residues 105–118 (QATDPHSIAERLRR). Residues 105 to 154 (QATDPHSIAERLRRERIAERMKSLQELVPNTNKTDKASMLDEIIEYVRFL) form the bHLH domain. The tract at residues 119–154 (ERIAERMKSLQELVPNTNKTDKASMLDEIIEYVRFL) is helix-loop-helix motif.

In terms of assembly, homodimer. As to expression, expressed in trichomes of the root maturation zone. Detected constitutively in flowers.

It is found in the nucleus. Transcription factor that regulates the development of root hairs. Does not seem to be involved in the regulation of sperm cell development. The protein is Transcription factor LRL3 of Arabidopsis thaliana (Mouse-ear cress).